A 361-amino-acid polypeptide reads, in one-letter code: Outer mitochondrial transmembrane helix translocase (361 aa).

Residues 1–15 lie on the Mitochondrial intermembrane side of the membrane; that stretch reads MVHAETFSRPLSRNE. The chain crosses the membrane as a helical span at residues 16–32; the sequence is VVGLIFRLTIFGAVTYF. Over 33-361 the chain is Cytoplasmic; that stretch reads TIKWMVDAID…QNVLTHVCLD (329 aa). An ATP-binding site is contributed by 133–140; it reads GPPGCGKT. Ser322 carries the phosphoserine modification.

The protein belongs to the AAA ATPase family. MSP1 subfamily. In terms of assembly, interacts with GRIA2 and GRIP1 in an ATP-dependent manner. ATAD1-catalyzed ATP hydrolysis disrupts not only its binding to GRIA2 and GRIP1, but also interaction between GRIP1 and GRIA2, leading to AMPAR complex disassembly.

It is found in the mitochondrion outer membrane. It localises to the peroxisome membrane. Its subcellular location is the postsynaptic cell membrane. It catalyses the reaction [protein]-with a C-terminal TM segment(out) + ATP + H2O = [protein]-with a C-terminal TM segment(in) + ADP + phosphate + H(+). Its function is as follows. Outer mitochondrial translocase required to remove mislocalized tail-anchored transmembrane proteins on mitochondria. Specifically recognizes and binds tail-anchored transmembrane proteins: acts as a dislocase that mediates the ATP-dependent extraction of mistargeted tail-anchored transmembrane proteins from the mitochondrion outer membrane. Also plays a critical role in regulating the surface expression of AMPA receptors (AMPAR), thereby regulating synaptic plasticity and learning and memory. Required for NMDA-stimulated AMPAR internalization and inhibition of GRIA1 and GRIA2 recycling back to the plasma membrane; these activities are ATPase-dependent. This Bos taurus (Bovine) protein is Outer mitochondrial transmembrane helix translocase.